The primary structure comprises 138 residues: MRALWIVAVCLIGAEGNLSQFGDMINKKTGIFGIMSYIYYGCYCGWGGKGKPLDATDRCCFVHDCCYGRVNGCDPKMGTYSYSFQNGDIVCGGDDPCLRAVCECDRVAAICFAENMNTYDKKYMLYSLFDCKEESEQC.

An N-terminal signal peptide occupies residues 1–16 (MRALWIVAVCLIGAEG). Intrachain disulfides connect cysteine 42/cysteine 131, cysteine 44/cysteine 60, cysteine 59/cysteine 111, cysteine 65/cysteine 138, cysteine 66/cysteine 104, cysteine 73/cysteine 97, and cysteine 91/cysteine 102. Positions 43, 45, and 47 each coordinate Ca(2+). Histidine 63 is an active-site residue. Aspartate 64 provides a ligand contact to Ca(2+). Residue aspartate 105 is part of the active site.

This sequence belongs to the phospholipase A2 family. Group II subfamily. D49 sub-subfamily. Ca(2+) serves as cofactor. In terms of tissue distribution, expressed by the venom gland.

It localises to the secreted. The enzyme catalyses a 1,2-diacyl-sn-glycero-3-phosphocholine + H2O = a 1-acyl-sn-glycero-3-phosphocholine + a fatty acid + H(+). Its function is as follows. PLA2 catalyzes the calcium-dependent hydrolysis of the 2-acyl groups in 3-sn-phosphoglycerides. This is Acidic phospholipase A2 PL1 from Vipera renardi (Steppe viper).